The sequence spans 420 residues: Tyrosine--tRNA ligase (420 aa).

Tyr-36 provides a ligand contact to L-tyrosine. The short motif at 41 to 50 (PTADSMHIGH) is the 'HIGH' region element. L-tyrosine is bound by residues Tyr-170 and Gln-174. The short motif at 231 to 235 (KFGKS) is the 'KMSKS' region element. Lys-234 lines the ATP pocket. One can recognise an S4 RNA-binding domain in the interval 353-420 (TNIVDFIVEA…KKKYFMVKYK (68 aa)).

Belongs to the class-I aminoacyl-tRNA synthetase family. TyrS type 1 subfamily. In terms of assembly, homodimer.

It localises to the cytoplasm. The enzyme catalyses tRNA(Tyr) + L-tyrosine + ATP = L-tyrosyl-tRNA(Tyr) + AMP + diphosphate + H(+). Functionally, catalyzes the attachment of tyrosine to tRNA(Tyr) in a two-step reaction: tyrosine is first activated by ATP to form Tyr-AMP and then transferred to the acceptor end of tRNA(Tyr). The polypeptide is Tyrosine--tRNA ligase (Staphylococcus carnosus (strain TM300)).